A 177-amino-acid polypeptide reads, in one-letter code: Large ribosomal subunit protein bL31m (177 aa).

The N-terminal 14 residues, 1-14 (MLKSIFAKRFASTG), are a transit peptide targeting the mitochondrion. The tract at residues 36–118 (KSRPAIYHQF…FSVDSTTPNS (83 aa)) is sufficient for general mitochondrial translation. Residues 87 to 177 (LVVVDANSGG…KLASKKRDKK (91 aa)) form a sufficient for dosage suppression of COX2 mutation region. Positions 111–123 (VDSTTPNSSSETV) are enriched in polar residues. Residues 111 to 144 (VDSTTPNSSSETVELSEENKKKTQIKKEEKEDVS) form a disordered region. Positions 127 to 144 (EENKKKTQIKKEEKEDVS) are enriched in basic and acidic residues.

This sequence belongs to the bacterial ribosomal protein bL31 family. Highly divergent. In terms of assembly, component of the mitochondrial large ribosomal subunit (mt-LSU). Mature yeast 74S mitochondrial ribosomes consist of a small (37S) and a large (54S) subunit. The 37S small subunit contains a 15S ribosomal RNA (15S mt-rRNA) and 34 different proteins. The 54S large subunit contains a 21S rRNA (21S mt-rRNA) and 46 different proteins.

The protein resides in the mitochondrion. Component of the mitochondrial ribosome (mitoribosome), a dedicated translation machinery responsible for the synthesis of mitochondrial genome-encoded proteins, including at least some of the essential transmembrane subunits of the mitochondrial respiratory chain. The mitoribosomes are attached to the mitochondrial inner membrane and translation products are cotranslationally integrated into the membrane. Overexpression of bL31m suppresses mutations in the COX2 leader peptide-encoding and initiation codon regions. The polypeptide is Large ribosomal subunit protein bL31m (MRPL36) (Saccharomyces cerevisiae (strain ATCC 204508 / S288c) (Baker's yeast)).